A 317-amino-acid chain; its full sequence is MKSDCMQTTICQERKKDPIEMFHSGQLVKVCAPMVRYSKLAFRTLVRKYSCDLCYTPMIVAADFVKSIKARDSEFTTNQGDCPLIVQFAANDARLLSDAARIVCPYANGIDINCGCPQRWAMAEGYGACLINKPELVQDMVKQVRNQVETPGFSVSIKIRIHDDLKRTVDLCQKAEATGVSWITVHGRTAEERHQPVHYDSIKIIKENMSIPVIANGDIRSLKEAENVWRITGTDGVMVARGLLANPAMFAGYEETPLKCIWDWVDIALELGTPYMCFHQHLMYMMEKITSRQEKRVFNALSSTSAIIDYLTDHYGI.

FMN contacts are provided by residues 33-35 and Gln87; that span reads PMV. Cys116 functions as the Proton donor in the catalytic mechanism. FMN is bound by residues Lys158, His186, 216 to 218, and 240 to 241; these read NGD and AR.

The protein belongs to the Dus family. Dus4 subfamily. It depends on FMN as a cofactor.

The catalysed reaction is 5,6-dihydrouridine(20a) in tRNA + NADP(+) = uridine(20a) in tRNA + NADPH + H(+). It catalyses the reaction 5,6-dihydrouridine(20a) in tRNA + NAD(+) = uridine(20a) in tRNA + NADH + H(+). The enzyme catalyses 5,6-dihydrouridine(20b) in tRNA + NAD(+) = uridine(20b) in tRNA + NADH + H(+). It carries out the reaction 5,6-dihydrouridine(20b) in tRNA + NADP(+) = uridine(20b) in tRNA + NADPH + H(+). Its function is as follows. Catalyzes the synthesis of dihydrouridine, a modified base found in the D-loop of most tRNAs. The polypeptide is tRNA-dihydrouridine(20a/20b) synthase [NAD(P)+]-like (DUS4L) (Homo sapiens (Human)).